The chain runs to 265 residues: 4-hydroxy-tetrahydrodipicolinate reductase (265 aa).

NAD(+) is bound at residue 9–14 (GPRGRM). NADP(+) is bound at residue Arg37. NAD(+)-binding positions include 98–100 (GTT) and 124–127 (APNF). His154 functions as the Proton donor/acceptor in the catalytic mechanism. Residue His155 participates in (S)-2,3,4,5-tetrahydrodipicolinate binding. The Proton donor role is filled by Lys158. 164–165 (GT) is a binding site for (S)-2,3,4,5-tetrahydrodipicolinate.

This sequence belongs to the DapB family.

The protein localises to the cytoplasm. It carries out the reaction (S)-2,3,4,5-tetrahydrodipicolinate + NAD(+) + H2O = (2S,4S)-4-hydroxy-2,3,4,5-tetrahydrodipicolinate + NADH + H(+). The enzyme catalyses (S)-2,3,4,5-tetrahydrodipicolinate + NADP(+) + H2O = (2S,4S)-4-hydroxy-2,3,4,5-tetrahydrodipicolinate + NADPH + H(+). It functions in the pathway amino-acid biosynthesis; L-lysine biosynthesis via DAP pathway; (S)-tetrahydrodipicolinate from L-aspartate: step 4/4. Functionally, catalyzes the conversion of 4-hydroxy-tetrahydrodipicolinate (HTPA) to tetrahydrodipicolinate. The protein is 4-hydroxy-tetrahydrodipicolinate reductase of Geobacillus thermodenitrificans (strain NG80-2).